Reading from the N-terminus, the 147-residue chain is Large ribosomal subunit protein uL13 (147 aa).

Belongs to the universal ribosomal protein uL13 family. Part of the 50S ribosomal subunit.

Its function is as follows. This protein is one of the early assembly proteins of the 50S ribosomal subunit, although it is not seen to bind rRNA by itself. It is important during the early stages of 50S assembly. This is Large ribosomal subunit protein uL13 from Ligilactobacillus salivarius (strain UCC118) (Lactobacillus salivarius).